An 85-amino-acid chain; its full sequence is MTNPLRGEVIRLYKNLLYLGREYPKGTAYFRERLKTAFMKNKDVTDPEKIQKLIDRGDFVIKELEALYYLRKYRAMKKRYYEPEH.

Belongs to the complex I LYR family.

The sequence is that of LYR motif-containing protein 5A (lyrm5a) from Danio rerio (Zebrafish).